A 220-amino-acid chain; its full sequence is Kinetochore protein Spc25 (220 aa).

Residues 41–119 (ILLDVKEAAA…NEIMERIHTL (79 aa)) are a coiled coil.

The protein belongs to the SPC25 family. In terms of assembly, component of the Ndc80 complex, which is composed of Ndc80, Nuf2 and Spc25.

It localises to the nucleus. The protein resides in the chromosome. The protein localises to the centromere. It is found in the kinetochore. Its function is as follows. Acts as a component of the essential kinetochore-associated Ndc80 complex, which is required for chromosome segregation and spindle checkpoint activity during meiosis and mitosis. Required for kinetochore integrity and the organization of stable microtubule binding sites in the outer plate of the kinetochore. Participates in SAC signaling that responds specifically to disruptions in spindle microtubule dynamics. The NDC80 complex synergistically enhances the affinity of the SKA1 complex for microtubules and may allow the NDC80 complex to track depolymerizing microtubules. This Drosophila erecta (Fruit fly) protein is Kinetochore protein Spc25.